The chain runs to 342 residues: MLFWGTPSYAVPTLDALNDSGYEIVGVVSQPDRRRGRGNQQMASPVKQRAMDQGLRLFTPERIRDEGDIQAELKSLKADISVVVAFGQLLPSTVLNQPPLGCWNGHASLLPRWRGAGPIQWSLLSGDSVTGVGIMAMEEGLDTGPVLVQERVAIGLLENANQLSNRLSSITAKLFLESMPRIAAAGPGIESERWKQLEVIKQEEIEGDPTYARMLSKKDHILDWNQSAMDLHRRVMGLYPNAFSSWNNKRLKVQATEPLDEELKSKLSEEVRPLLGRWQDGEHEPGKILACESDLGLVVSTKTCPLLIRQGQLEGKSKALGEVLIQQLQATVGQGLGVGFNI.

Residue 108–111 participates in (6S)-5,6,7,8-tetrahydrofolate binding; sequence SLLP.

It belongs to the Fmt family.

It carries out the reaction L-methionyl-tRNA(fMet) + (6R)-10-formyltetrahydrofolate = N-formyl-L-methionyl-tRNA(fMet) + (6S)-5,6,7,8-tetrahydrofolate + H(+). Functionally, attaches a formyl group to the free amino group of methionyl-tRNA(fMet). The formyl group appears to play a dual role in the initiator identity of N-formylmethionyl-tRNA by promoting its recognition by IF2 and preventing the misappropriation of this tRNA by the elongation apparatus. This Prochlorococcus marinus (strain MIT 9313) protein is Methionyl-tRNA formyltransferase.